The primary structure comprises 451 residues: Tubulin alpha-1 chain (451 aa).

Q11 is a GTP binding site. K40 carries the post-translational modification N6-acetyllysine. GTP is bound by residues E71, T145, T179, N206, and N228. A Mg(2+)-binding site is contributed by E71. E254 is a catalytic residue. A disordered region spans residues 429–451 (EKDYEEVGAESGEGEEGDEGEEY). A compositionally biased stretch (acidic residues) spans 431–451 (DYEEVGAESGEGEEGDEGEEY).

This sequence belongs to the tubulin family. As to quaternary structure, dimer of alpha and beta chains. A typical microtubule is a hollow water-filled tube with an outer diameter of 25 nm and an inner diameter of 15 nM. Alpha-beta heterodimers associate head-to-tail to form protofilaments running lengthwise along the microtubule wall with the beta-tubulin subunit facing the microtubule plus end conferring a structural polarity. Microtubules usually have 13 protofilaments but different protofilament numbers can be found in some organisms and specialized cells. It depends on Mg(2+) as a cofactor. Post-translationally, undergoes a tyrosination/detyrosination cycle, the cyclic removal and re-addition of a C-terminal tyrosine residue by the enzymes tubulin tyrosine carboxypeptidase (TTCP) and tubulin tyrosine ligase (TTL), respectively. In terms of processing, acetylation of alpha chains at Lys-40 stabilizes microtubules and affects affinity and processivity of microtubule motors. This modification has a role in multiple cellular functions, ranging from cell motility, cell cycle progression or cell differentiation to intracellular trafficking and signaling.

The protein resides in the cytoplasm. It is found in the cytoskeleton. It carries out the reaction GTP + H2O = GDP + phosphate + H(+). In terms of biological role, tubulin is the major constituent of microtubules, a cylinder consisting of laterally associated linear protofilaments composed of alpha- and beta-tubulin heterodimers. Microtubules grow by the addition of GTP-tubulin dimers to the microtubule end, where a stabilizing cap forms. Below the cap, tubulin dimers are in GDP-bound state, owing to GTPase activity of alpha-tubulin. The protein is Tubulin alpha-1 chain (TUBA1) of Anemia phyllitidis (Fern).